The sequence spans 370 residues: MPVSKKILFLAGDGIGPEVMAQVRRVMDWLNQTGRTAFEVEDALVGGAAYDAQGTPLHDDTVALALAADAVLLGAVGGPKWDASLPFELKPERGLLRLRKDLELFANLRPAMVFDALAEASTLKTELVSGLDVMIVRELTGGVYFGQPRGISALPNGERRGVNTQVYDTHEIVRVAKVAFDLAGKRGKRLCSVEKANVMESGLLWREEVTKLGADYPEIALSHMYADNCAMQLVRQPKQFDVIVTDNLFGDILSDCAAMLTGSLGMLPSASLGAADAAGNRRAMYEPVHGSAPDIAGQDKANPLATILSFSMMLRYSFDLAEEADLVDNAVRGVLAKGLRTGDIFQPGKTLVGTTGMGDALLAEMAQLAN.

Residues arginine 99, arginine 109, arginine 137, and aspartate 227 each contribute to the substrate site. Positions 227, 251, and 255 each coordinate Mg(2+). 290 to 302 is an NAD(+) binding site; sequence GSAPDIAGQDKAN.

This sequence belongs to the isocitrate and isopropylmalate dehydrogenases family. LeuB type 1 subfamily. In terms of assembly, homodimer. Mg(2+) is required as a cofactor. The cofactor is Mn(2+).

Its subcellular location is the cytoplasm. It catalyses the reaction (2R,3S)-3-isopropylmalate + NAD(+) = 4-methyl-2-oxopentanoate + CO2 + NADH. Its pathway is amino-acid biosynthesis; L-leucine biosynthesis; L-leucine from 3-methyl-2-oxobutanoate: step 3/4. In terms of biological role, catalyzes the oxidation of 3-carboxy-2-hydroxy-4-methylpentanoate (3-isopropylmalate) to 3-carboxy-4-methyl-2-oxopentanoate. The product decarboxylates to 4-methyl-2 oxopentanoate. The chain is 3-isopropylmalate dehydrogenase from Rhodospirillum rubrum (strain ATCC 11170 / ATH 1.1.1 / DSM 467 / LMG 4362 / NCIMB 8255 / S1).